The chain runs to 1324 residues: Mediator of RNA polymerase II transcription subunit 13 (1324 aa).

6 disordered regions span residues 296-346 (ESGV…PPEA), 386-455 (FFDD…ATTA), 535-590 (GRFF…EPEI), 607-631 (HDDKPAKKIDSSNDTTNSDGNSNNS), 694-816 (KGGQ…VPSA), and 1151-1198 (TGSD…PDIY). The span at 298-331 (GVNTNESTAAQPQPAQNGTNSMAPAAGTTNATTQ) shows a compositional bias: polar residues. Acidic residues predominate over residues 398–407 (DGDNDNGNDN). Over residues 408–442 (DNDKADAMDVDVKEEAKKEEMIKKETKEEVPVKEE) the composition is skewed to basic and acidic residues. Over residues 546–566 (DNEGSSDNTGDSSDSGDGSES) the composition is skewed to low complexity. Composition is skewed to basic and acidic residues over residues 567–578 (VPRDVKRQKVDE) and 607–617 (HDDKPAKKIDS). Low complexity-rich tracts occupy residues 618-631 (SNDTTNSDGNSNNS) and 724-743 (SNASGVPSGSSGAQASQMGA). Positions 750–784 (LSPSRGATPQPEGSSPETRPSNWTPGITSQVNSAA) are enriched in polar residues. Composition is skewed to low complexity over residues 785-816 (SSPVPLQQHQQQQQSFSPMSPQTPAQAPVPSA) and 1172-1184 (TGAAGAASTGSAP).

Belongs to the Mediator complex subunit 13 family. In terms of assembly, component of the SRB8-11 complex, which itself associates with the Mediator complex.

The protein resides in the nucleus. In terms of biological role, component of the SRB8-11 complex. The SRB8-11 complex is a regulatory module of the Mediator complex which is itself involved in regulation of basal and activated RNA polymerase II-dependent transcription. The SRB8-11 complex may be involved in the transcriptional repression of a subset of genes regulated by Mediator. It may inhibit the association of the Mediator complex with RNA polymerase II to form the holoenzyme complex. The sequence is that of Mediator of RNA polymerase II transcription subunit 13 (SSN2) from Yarrowia lipolytica (strain CLIB 122 / E 150) (Yeast).